The sequence spans 525 residues: GMP synthase [glutamine-hydrolyzing] (525 aa).

Residues 8–207 (KILILDFGSQ…ALDICGCKAN (200 aa)) form the Glutamine amidotransferase type-1 domain. Cys85 (nucleophile) is an active-site residue. Residues His181 and Glu183 contribute to the active site. The region spanning 208–400 (WKPSSIIEDA…LGLPYNMLYR (193 aa)) is the GMPS ATP-PPase domain. 235 to 241 (SGGVDSS) is a binding site for ATP.

Homodimer.

It catalyses the reaction XMP + L-glutamine + ATP + H2O = GMP + L-glutamate + AMP + diphosphate + 2 H(+). Its pathway is purine metabolism; GMP biosynthesis; GMP from XMP (L-Gln route): step 1/1. Functionally, catalyzes the synthesis of GMP from XMP. The protein is GMP synthase [glutamine-hydrolyzing] of Shewanella frigidimarina (strain NCIMB 400).